Here is a 642-residue protein sequence, read N- to C-terminus: AEKIKICLQKQVNSSFSLHNGFGGNLYATEEKRMFELVKPKAGASVLNQSTWICFGDSRTDQSNSAFPRSADVSAKTAEKFRSLSGGSLMLSMFGPPGKVDYLYQGCGKHKVFYEGVNWSPHTAIDCYRKNWTDIKLNFQKSIYELASQSHCMSLVNALDKTIPLQATKGVAKNCNNSFLKNPALYTQEVKPLEQICGEENLAFFTLPTQFGTYECKLHLVASCYFIYDSKEVYNKRGCGNYFQVIYDSSGKVVGGLDNRVSPYTGNSGDTPTMQCDMLQLKPGRYSVRSSPRFLLMPERSYCFDMKEKGLVTAVQSIWGKGRKSDYAVDQACLSTPGCMLIQKQKPYIGEADDHHGDQEMRELLSGLDYEARCISQSGWVNETSPFTEEYLLPPKFGRCPLAAKEESIPKIPDGLLIPTSGTDTTVTKPKSRIFGIDDLIIGLLFVAIVEAGIGGYLLGSRKESGGGVTKESAEKGFEKIGNDIQILRSSTNIAIEKLNDRISHDEQAIRDLTLEIENARSEALLGELGIIRALLVGNISIGLQESLWELASEITNRAGDLAVEVSPGCWIIDNNICDQSCQNFIFKFNETAPVPTIPPLDTKIDLQSDPFYWGSSLGLAITTPISLAALVISGIAICRTK.

The Extracellular segment spans residues 1 to 617 (AEKIKICLQK…QSDPFYWGSS (617 aa)). N-linked (GlcNAc...) asparagine; by host glycans are attached at residues Asn-13, Asn-48, Asn-131, and Asn-176. The N-acetyl-9-O-acetylneuraminic acid binding stretch occupies residues 83 to 297 (SLSGGSLMLS…VRSSPRFLLM (215 aa)). 3 cysteine pairs are disulfide-bonded: Cys-197–Cys-239, Cys-216–Cys-303, and Cys-224–Cys-276. Positions 297–351 (MPERSYCFDMKEKGLVTAVQSIWGKGRKSDYAVDQACLSTPGCMLIQKQKPYIGE) are esterase domain-2. The segment at 352–637 (ADDHHGDQEM…LAALVISGIA (286 aa)) is fusion domain-2. Catalysis depends on charge relay system residues Asp-353 and His-356. N-linked (GlcNAc...) asparagine; by host glycans are attached at residues Asn-382, Asn-539, and Asn-590. The chain crosses the membrane as a helical span at residues 618–638 (LGLAITTPISLAALVISGIAI). Residues 639–642 (CRTK) are Cytoplasmic-facing.

This sequence belongs to the influenza viruses hemagglutinin family. Homotrimer of disulfide-linked HEF1-HEF2. In natural infection, inactive HEF is matured into HEF1 and HEF2 outside the cell by one or more trypsin-like, arginine-specific endoprotease.

It localises to the virion membrane. Its subcellular location is the host cell membrane. It catalyses the reaction N-acetyl-9-O-acetylneuraminate + H2O = N-acetylneuraminate + acetate + H(+). The catalysed reaction is N-acetyl-4-O-acetylneuraminate + H2O = N-acetylneuraminate + acetate + H(+). In terms of biological role, binds to the N-acetyl-9-O-acetylneuraminic acid residues on the cell surface, bringing about the attachment of the virus particle to the cell. Plays a major role in the determination of host range restriction and virulence. Class I viral fusion protein. Responsible for penetration of the virus into the cell cytoplasm by mediating the fusion of the membrane of the endocytosed virus particle with the endosomal membrane. Low pH in endosomes induce an irreversible conformational change in HEF2, releasing the fusion hydrophobic peptide. Several trimers are required to form a competent fusion pore. Displays a receptor-destroying activity which is a neuraminidate-O-acetyl esterase. This activity cleaves off any receptor on the cell surface, which would otherwise prevent virions release. These cleavages prevent self-aggregation and ensure the efficient spread of the progeny virus from cell to cell. The chain is Hemagglutinin-esterase-fusion glycoprotein from Influenza C virus (strain C/Pig/Beijing/115/1981).